The following is a 163-amino-acid chain: Cyclic pyranopterin monophosphate synthase (163 aa).

Residues 76 to 78 (LCH) and 114 to 115 (ME) contribute to the substrate site. Residue aspartate 129 is part of the active site.

This sequence belongs to the MoaC family. In terms of assembly, homohexamer; trimer of dimers.

It catalyses the reaction (8S)-3',8-cyclo-7,8-dihydroguanosine 5'-triphosphate = cyclic pyranopterin phosphate + diphosphate. The protein operates within cofactor biosynthesis; molybdopterin biosynthesis. Functionally, catalyzes the conversion of (8S)-3',8-cyclo-7,8-dihydroguanosine 5'-triphosphate to cyclic pyranopterin monophosphate (cPMP). The chain is Cyclic pyranopterin monophosphate synthase from Desulfovibrio desulfuricans (strain ATCC 27774 / DSM 6949 / MB).